Consider the following 83-residue polypeptide: UPF0457 protein YnzG (83 aa).

It belongs to the UPF0457 family.

The sequence is that of UPF0457 protein YnzG (ynzG) from Bacillus subtilis (strain 168).